Reading from the N-terminus, the 619-residue chain is 1-deoxy-D-xylulose-5-phosphate synthase (619 aa).

Thiamine diphosphate contacts are provided by residues H74 and 115 to 117 (GHS). Position 146 (D146) interacts with Mg(2+). Thiamine diphosphate is bound by residues 147-148 (GA), N175, and Y285. N175 is a binding site for Mg(2+). The segment at 289–310 (EKSPSKYHGIPPSNDKKEEPNK) is disordered. A thiamine diphosphate-binding site is contributed by E365.

This sequence belongs to the transketolase family. DXPS subfamily. In terms of assembly, homodimer. It depends on Mg(2+) as a cofactor. The cofactor is thiamine diphosphate.

It carries out the reaction D-glyceraldehyde 3-phosphate + pyruvate + H(+) = 1-deoxy-D-xylulose 5-phosphate + CO2. Its pathway is metabolic intermediate biosynthesis; 1-deoxy-D-xylulose 5-phosphate biosynthesis; 1-deoxy-D-xylulose 5-phosphate from D-glyceraldehyde 3-phosphate and pyruvate: step 1/1. Its function is as follows. Catalyzes the acyloin condensation reaction between C atoms 2 and 3 of pyruvate and glyceraldehyde 3-phosphate to yield 1-deoxy-D-xylulose-5-phosphate (DXP). This Clostridium botulinum (strain Alaska E43 / Type E3) protein is 1-deoxy-D-xylulose-5-phosphate synthase.